We begin with the raw amino-acid sequence, 245 residues long: Isopentenyl phosphate kinase (245 aa).

5–9 (KIGGS) contacts ATP. G45 provides a ligand contact to substrate. G46 serves as a coordination point for ATP. Substrate contacts are provided by H50 and G143. Residues D164, 169-174 (YSKDPK), G201, and K205 contribute to the ATP site.

Belongs to the isopentenyl phosphate kinase family. In terms of assembly, homodimer.

It carries out the reaction isopentenyl phosphate + ATP = isopentenyl diphosphate + ADP. Functionally, catalyzes the formation of isopentenyl diphosphate (IPP), the building block of all isoprenoids. Has lower activity with isopentenyl thiolophosphate (ISP). Has low activity with dimethylallyl phosphate (DMAP), 1-butyl phosphate (BP) and 3-buten-1-yl phosphate (BEP). Has no significant activity with geranyl phosphate (in vitro). The protein is Isopentenyl phosphate kinase of Thermoplasma acidophilum (strain ATCC 25905 / DSM 1728 / JCM 9062 / NBRC 15155 / AMRC-C165).